Here is a 29-residue protein sequence, read N- to C-terminus: Putative membrane protein PmrR (29 aa).

A helical membrane pass occupies residues 5-27 (VYESLTTVFSVLVVSSFLYIWFA).

The protein resides in the cell inner membrane. Functionally, may bind to BasS and modulate its sensor kinase activity. The polypeptide is Putative membrane protein PmrR (pmrR) (Escherichia coli (strain K12)).